The chain runs to 67 residues: SPbeta prophage-derived uncharacterized protein YoqF (67 aa).

This Bacillus subtilis (strain 168) protein is SPbeta prophage-derived uncharacterized protein YoqF (yoqF).